An 89-amino-acid polypeptide reads, in one-letter code: Small ribosomal subunit protein uS15 (89 aa).

A compositionally biased stretch (basic and acidic residues) spans 1–21 (MSLHQERKSELVSKFRTHESD). Residues 1–25 (MSLHQERKSELVSKFRTHESDTGSP) form a disordered region.

This sequence belongs to the universal ribosomal protein uS15 family. In terms of assembly, part of the 30S ribosomal subunit. Forms a bridge to the 50S subunit in the 70S ribosome, contacting the 23S rRNA.

One of the primary rRNA binding proteins, it binds directly to 16S rRNA where it helps nucleate assembly of the platform of the 30S subunit by binding and bridging several RNA helices of the 16S rRNA. Its function is as follows. Forms an intersubunit bridge (bridge B4) with the 23S rRNA of the 50S subunit in the ribosome. The protein is Small ribosomal subunit protein uS15 of Myxococcus xanthus (strain DK1622).